The chain runs to 380 residues: Cytochrome b (380 aa).

Helical transmembrane passes span 34 to 54 (FGSLLGICLTTQILTGLLLAM), 78 to 99 (WLIRNLHANGASFFFICIYLHI), 114 to 134 (WNTGIILLLTLMATAFVGYVL), and 179 to 199 (FFALHFLLPFMIAGLTLIHLT). 2 residues coordinate heme b: histidine 84 and histidine 98. Histidine 183 and histidine 197 together coordinate heme b. Position 202 (histidine 202) interacts with a ubiquinone. A run of 4 helical transmembrane segments spans residues 227–247 (TKDTLGFALMLLPLTTLALFS), 289–309 (LGGVLALAASVLILFLIPLLH), 321–341 (LSQLLFWTLVANLTILTWIGS), and 348–368 (FIIIGQLASLTYFTILLILFP).

It belongs to the cytochrome b family. The cytochrome bc1 complex contains 11 subunits: 3 respiratory subunits (MT-CYB, CYC1 and UQCRFS1), 2 core proteins (UQCRC1 and UQCRC2) and 6 low-molecular weight proteins (UQCRH/QCR6, UQCRB/QCR7, UQCRQ/QCR8, UQCR10/QCR9, UQCR11/QCR10 and a cleavage product of UQCRFS1). This cytochrome bc1 complex then forms a dimer. Heme b serves as cofactor.

The protein resides in the mitochondrion inner membrane. Component of the ubiquinol-cytochrome c reductase complex (complex III or cytochrome b-c1 complex) that is part of the mitochondrial respiratory chain. The b-c1 complex mediates electron transfer from ubiquinol to cytochrome c. Contributes to the generation of a proton gradient across the mitochondrial membrane that is then used for ATP synthesis. In Aptenodytes patagonicus (King penguin), this protein is Cytochrome b (MT-CYB).